Consider the following 302-residue polypeptide: Bifunctional protein FolD (302 aa).

NADP(+) is bound by residues 165–167 (GRS), serine 190, and isoleucine 231.

This sequence belongs to the tetrahydrofolate dehydrogenase/cyclohydrolase family. As to quaternary structure, homodimer.

It carries out the reaction (6R)-5,10-methylene-5,6,7,8-tetrahydrofolate + NADP(+) = (6R)-5,10-methenyltetrahydrofolate + NADPH. The enzyme catalyses (6R)-5,10-methenyltetrahydrofolate + H2O = (6R)-10-formyltetrahydrofolate + H(+). It functions in the pathway one-carbon metabolism; tetrahydrofolate interconversion. In terms of biological role, catalyzes the oxidation of 5,10-methylenetetrahydrofolate to 5,10-methenyltetrahydrofolate and then the hydrolysis of 5,10-methenyltetrahydrofolate to 10-formyltetrahydrofolate. The polypeptide is Bifunctional protein FolD (Prochlorococcus marinus (strain SARG / CCMP1375 / SS120)).